The sequence spans 124 residues: Large ribosomal subunit protein bL12 (124 aa).

The protein belongs to the bacterial ribosomal protein bL12 family. As to quaternary structure, homodimer. Part of the ribosomal stalk of the 50S ribosomal subunit. Forms a multimeric L10(L12)X complex, where L10 forms an elongated spine to which 2 to 4 L12 dimers bind in a sequential fashion. Binds GTP-bound translation factors.

In terms of biological role, forms part of the ribosomal stalk which helps the ribosome interact with GTP-bound translation factors. Is thus essential for accurate translation. This chain is Large ribosomal subunit protein bL12, found in Burkholderia mallei (strain NCTC 10247).